The following is a 275-amino-acid chain: Probable endonuclease 4 (275 aa).

His66, His106, Glu140, Asp172, His175, His209, Asp222, His224, and Glu254 together coordinate Zn(2+).

Belongs to the AP endonuclease 2 family. The cofactor is Zn(2+).

It carries out the reaction Endonucleolytic cleavage to 5'-phosphooligonucleotide end-products.. Functionally, endonuclease IV plays a role in DNA repair. It cleaves phosphodiester bonds at apurinic or apyrimidinic (AP) sites, generating a 3'-hydroxyl group and a 5'-terminal sugar phosphate. The protein is Probable endonuclease 4 of Halobacterium salinarum (strain ATCC 29341 / DSM 671 / R1).